The following is a 537-amino-acid chain: Zinc finger protein 703 (537 aa).

Disordered stretches follow at residues 1–38, 90–254, and 300–323; these read MNCSPPGSSTDTERQSSSSGTPVAPRPTLAPTHPLRQA, SQIG…VAPV, and VGNQLPGTLGLPGKPPSSSPLTGA. Residues 101–111 show a composition bias toward polar residues; that stretch reads SKLNSVTSSGL. Positions 149 to 158 are enriched in low complexity; sequence GSSSGGAADK. Residues 176 to 185 show a composition bias toward polar residues; sequence SPSSRVSSPG. Basic and acidic residues predominate over residues 188-203; the sequence is CDSKNNESQEKKEPEA. Over residues 205-220 the composition is skewed to polar residues; that stretch reads KANSETSQVNPTLTRA. Residues 221 to 232 show a composition bias toward low complexity; the sequence is STSNSSAESSQS. A C2H2-type zinc finger spans residues 409-437; it reads HICNWVSASGPCDKRFSTSEELLAHLRTH.

The protein belongs to the Elbow/Noc family.

Its subcellular location is the nucleus. It is found in the cytoplasm. Functionally, transcriptional corepressor which does not bind directly to DNA and may regulate transcription through recruitment of histone deacetylases to gene promoters. Regulates cell adhesion, migration and proliferation. Involved in specification of the lateral neural plate border (NPB). May be required for segmental gene expression during hindbrain development. This Xenopus tropicalis (Western clawed frog) protein is Zinc finger protein 703 (znf703).